Reading from the N-terminus, the 129-residue chain is Mini-ribonuclease 3-like protein (129 aa).

Residue aspartate 23 is part of the active site.

This sequence belongs to the MrnC RNase family.

In terms of biological role, might be a ribonuclease involved in RNA processing. The protein is Mini-ribonuclease 3-like protein (mrnCL) of Fusobacterium nucleatum subsp. nucleatum (strain ATCC 25586 / DSM 15643 / BCRC 10681 / CIP 101130 / JCM 8532 / KCTC 2640 / LMG 13131 / VPI 4355).